Reading from the N-terminus, the 111-residue chain is Nucleoid-associated protein CYB_2894 (111 aa).

The protein belongs to the YbaB/EbfC family. Homodimer.

It is found in the cytoplasm. The protein localises to the nucleoid. In terms of biological role, binds to DNA and alters its conformation. May be involved in regulation of gene expression, nucleoid organization and DNA protection. The chain is Nucleoid-associated protein CYB_2894 from Synechococcus sp. (strain JA-2-3B'a(2-13)) (Cyanobacteria bacterium Yellowstone B-Prime).